We begin with the raw amino-acid sequence, 473 residues long: ATP synthase subunit beta (473 aa).

Residue 158 to 165 (GGAGVGKT) coordinates ATP.

It belongs to the ATPase alpha/beta chains family. In terms of assembly, F-type ATPases have 2 components, CF(1) - the catalytic core - and CF(0) - the membrane proton channel. CF(1) has five subunits: alpha(3), beta(3), gamma(1), delta(1), epsilon(1). CF(0) has three main subunits: a(1), b(2) and c(9-12). The alpha and beta chains form an alternating ring which encloses part of the gamma chain. CF(1) is attached to CF(0) by a central stalk formed by the gamma and epsilon chains, while a peripheral stalk is formed by the delta and b chains.

It localises to the cell membrane. It carries out the reaction ATP + H2O + 4 H(+)(in) = ADP + phosphate + 5 H(+)(out). Produces ATP from ADP in the presence of a proton gradient across the membrane. The catalytic sites are hosted primarily by the beta subunits. The protein is ATP synthase subunit beta of Bacillus licheniformis (strain ATCC 14580 / DSM 13 / JCM 2505 / CCUG 7422 / NBRC 12200 / NCIMB 9375 / NCTC 10341 / NRRL NRS-1264 / Gibson 46).